A 184-amino-acid chain; its full sequence is Elongation factor P (184 aa).

It belongs to the elongation factor P family.

Its subcellular location is the cytoplasm. It functions in the pathway protein biosynthesis; polypeptide chain elongation. Functionally, involved in peptide bond synthesis. Stimulates efficient translation and peptide-bond synthesis on native or reconstituted 70S ribosomes in vitro. Probably functions indirectly by altering the affinity of the ribosome for aminoacyl-tRNA, thus increasing their reactivity as acceptors for peptidyl transferase. This chain is Elongation factor P, found in Thermus thermophilus (strain ATCC BAA-163 / DSM 7039 / HB27).